We begin with the raw amino-acid sequence, 232 residues long: Ribose-5-phosphate isomerase A (232 aa).

Substrate contacts are provided by residues 34 to 37 (TGST), 89 to 92 (DGAD), and 102 to 105 (KGGG). The active-site Proton acceptor is E111. Substrate is bound at residue K129.

This sequence belongs to the ribose 5-phosphate isomerase family. In terms of assembly, homodimer.

It catalyses the reaction aldehydo-D-ribose 5-phosphate = D-ribulose 5-phosphate. Its pathway is carbohydrate degradation; pentose phosphate pathway; D-ribose 5-phosphate from D-ribulose 5-phosphate (non-oxidative stage): step 1/1. Catalyzes the reversible conversion of ribose-5-phosphate to ribulose 5-phosphate. The sequence is that of Ribose-5-phosphate isomerase A from Protochlamydia amoebophila (strain UWE25).